The primary structure comprises 374 residues: Translocating chain-associated membrane protein 1 (374 aa).

Over 1–29 (MAIRKKSTKSPPVLSHEFVLQNHADIVSC) the chain is Cytoplasmic. A helical transmembrane segment spans residues 30 to 50 (VAMVFLLGLMFEITAKASIIF). At 51–76 (VTLQYNVTLPATEEQATESASLYYYG) the chain is on the lumenal side. An N-linked (GlcNAc...) asparagine glycan is attached at N56. The helical transmembrane segment at 77 to 97 (IKDLATVFFYMLVAIIIHAVI) threads the bilayer. The Cytoplasmic segment spans residues 98–121 (QEYMLDKINRRMHFSKTKHSKFNE). The TLC domain occupies 117–326 (SKFNESGQLS…NFQLRRWREH (210 aa)). Residues 122–142 (SGQLSAFYLFACVWGTFILIS) form a helical membrane-spanning segment. The Lumenal portion of the chain corresponds to 143–159 (ENYISDPTILWRAYPHN). The chain crosses the membrane as a helical span at residues 160–180 (LMTFQMKFFYISQLAYWLHAF). Over 181 to 192 (PELYFQKTKRED) the chain is Cytoplasmic. The helical transmembrane segment at 193 to 213 (IPRQLVYIGLYLFHIAGAYLL) threads the bilayer. A topological domain (lumenal) is located at residue N214. Residues 215–235 (LNHLGLVLLVLHYFVEFLFHI) form a helical membrane-spanning segment. Topologically, residues 236–251 (SRLFYFSNEKYQKGFS) are cytoplasmic. A helical membrane pass occupies residues 252 to 272 (LWAVLFVLGRLLTLILSVLTV). Residues 273 to 297 (GFGLARAENQKLDFSTGNFNVLAVR) are Lumenal-facing. Residues 298-318 (IAVLASICITQAFMVWKFINF) form a helical membrane-spanning segment. Topologically, residues 319–374 (QLRRWREHSAFQAPAVKKKPTVTKGRSSKKGTENGVNGTLTSNVADSPRNKKEKSS) are cytoplasmic. Residues 334–347 (VKKKPTVTKGRSSK) are compositionally biased toward basic residues. Residues 334-374 (VKKKPTVTKGRSSKKGTENGVNGTLTSNVADSPRNKKEKSS) are disordered. A compositionally biased stretch (polar residues) spans 352 to 363 (NGVNGTLTSNVA). At S365 the chain carries Phosphoserine.

The protein belongs to the TRAM family. Interacts with SEC61B. May interact with Derlin-1/DERL1. Post-translationally, N-glycosylated.

The protein resides in the endoplasmic reticulum membrane. Functionally, involved in the translocation of nascent protein chains into or through the endoplasmic reticulum (ER) membrane by facilitating the proper chain positioning at the SEC61 channel. Regulates the exposure of nascent secretory protein chain to the cytosol during translocation into the ER. May affect the phospholipid bilayer in the vicinity of the lateral gate of the SEC61 channel, thereby facilitating ER protein transport. Intimately associates with transmembrane (TM) domain of nascent membrane proteins during the entire integration process into the ER membrane. Associates with the second TM domain of G-protein-coupled receptor opsin/OPSD nascent chain in the ER membrane, which may facilitate its integration into the membrane. Under conditions of ER stress, participates in the disposal of misfolded ER membrane proteins during the unfolded protein response (UPR), an integrated stress response (ISR) pathway, by selectively retrotranslocating misfolded ER-membrane proteins from the ER into the cytosol where they are ubiquitinated and degraded by the proteasome. The protein is Translocating chain-associated membrane protein 1 (TRAM1) of Pongo abelii (Sumatran orangutan).